A 504-amino-acid polypeptide reads, in one-letter code: Cytochrome P450 71B7 (504 aa).

Residues 1-21 (MSILLCFLCLLPVFLVSLSIL) form a helical membrane-spanning segment. Lys82 is covalently cross-linked (Glycyl lysine isopeptide (Lys-Gly) (interchain with G-Cter in ubiquitin)). Cys446 is a binding site for heme.

This sequence belongs to the cytochrome P450 family. Requires heme as cofactor. Highly expressed in rosette leaves. Also expressed in roots, leaves, flowers, and siliques.

It is found in the membrane. In Arabidopsis thaliana (Mouse-ear cress), this protein is Cytochrome P450 71B7 (CYP71B7).